The following is a 242-amino-acid chain: tRNA (guanine-N(7)-)-methyltransferase (242 aa).

Residues E66, E91, D118, and D141 each coordinate S-adenosyl-L-methionine. D141 is an active-site residue. Residues K145, D177, and T214–E217 contribute to the substrate site.

This sequence belongs to the class I-like SAM-binding methyltransferase superfamily. TrmB family. Monomer.

The catalysed reaction is guanosine(46) in tRNA + S-adenosyl-L-methionine = N(7)-methylguanosine(46) in tRNA + S-adenosyl-L-homocysteine. It functions in the pathway tRNA modification; N(7)-methylguanine-tRNA biosynthesis. Its function is as follows. Catalyzes the formation of N(7)-methylguanine at position 46 (m7G46) in tRNA. This chain is tRNA (guanine-N(7)-)-methyltransferase, found in Buchnera aphidicola subsp. Baizongia pistaciae (strain Bp).